A 349-amino-acid chain; its full sequence is Quinolinate synthase (349 aa).

Iminosuccinate-binding residues include His52 and Ser69. Cys114 contributes to the [4Fe-4S] cluster binding site. Iminosuccinate-binding positions include 140–142 (YFN) and Ser157. Position 201 (Cys201) interacts with [4Fe-4S] cluster. Iminosuccinate is bound by residues 227–229 (HPE) and Thr255. A [4Fe-4S] cluster-binding site is contributed by Cys300.

Belongs to the quinolinate synthase family. Type 2 subfamily. [4Fe-4S] cluster is required as a cofactor.

The protein resides in the cytoplasm. It carries out the reaction iminosuccinate + dihydroxyacetone phosphate = quinolinate + phosphate + 2 H2O + H(+). Its pathway is cofactor biosynthesis; NAD(+) biosynthesis; quinolinate from iminoaspartate: step 1/1. Functionally, catalyzes the condensation of iminoaspartate with dihydroxyacetone phosphate to form quinolinate. The sequence is that of Quinolinate synthase from Mycolicibacterium paratuberculosis (strain ATCC BAA-968 / K-10) (Mycobacterium paratuberculosis).